Reading from the N-terminus, the 154-residue chain is 3-hydroxyacyl-[acyl-carrier-protein] dehydratase FabZ (154 aa).

His60 is an active-site residue.

Belongs to the thioester dehydratase family. FabZ subfamily.

Its subcellular location is the cytoplasm. The catalysed reaction is a (3R)-hydroxyacyl-[ACP] = a (2E)-enoyl-[ACP] + H2O. In terms of biological role, involved in unsaturated fatty acids biosynthesis. Catalyzes the dehydration of short chain beta-hydroxyacyl-ACPs and long chain saturated and unsaturated beta-hydroxyacyl-ACPs. In Synechococcus sp. (strain CC9311), this protein is 3-hydroxyacyl-[acyl-carrier-protein] dehydratase FabZ.